We begin with the raw amino-acid sequence, 364 residues long: O-methyltransferase 1 (364 aa).

Positions 183, 207, 230, 250, and 264 each coordinate S-adenosyl-L-homocysteine. Asp230 lines the S-adenosyl-L-methionine pocket. His268 functions as the Proton acceptor in the catalytic mechanism.

The protein belongs to the class I-like SAM-binding methyltransferase superfamily. Cation-independent O-methyltransferase family. In terms of assembly, homodimer.

It carries out the reaction dopamine + S-adenosyl-L-methionine = 3-methoxytyramine + S-adenosyl-L-homocysteine + H(+). It catalyses the reaction 3,4-dihydroxy-5-methoxyphenethylamine + S-adenosyl-L-methionine = 4-hydroxy-3,5-dimethoxyphenethylamine + S-adenosyl-L-homocysteine + H(+). It participates in aromatic compound metabolism. It functions in the pathway alkaloid biosynthesis. In terms of biological role, O-methyltransferase participating in the biosynthesis of natural products derived from phenylethylamine, including mescaline, a natural hallucinogen potentially used in psychotherapeutic treatments. Catalyzes the O-methylation of mescaline meta hydroxyl groups, using dopamine and 3,4-dihydroxy-5-methoxyphenethylamine as substrates. This chain is O-methyltransferase 1, found in Lophophora williamsii (Peyote).